The primary structure comprises 275 residues: MQIKTITLKLSAVSLGALFFSGCLGTSFFSSLDNAQVYYPSNDFKSSPSSSGTKGTMKPYTINGKTYYPTVVAVGETADGIASWYGPGFHGKKTSNGETYNQNALTAAHKTLPMNTILKVTNLNNNRQVTVRVNDRGPFVNNRIIDLSKGAASQIDMIASGTAPVRLEVIGFGSSNSGNNIVHSNVNYGNSGEIANNGQIYEGGNFMVQIGAFKNPAGAQTIAARYKTYRTYSSTIRTSSVDGLNRVFLTGFRSEDEARDFAASGAFAGAFVVRE.

Positions 1–22 (MQIKTITLKLSAVSLGALFFSG) are cleaved as a signal peptide. Residue Cys23 is the site of N-palmitoyl cysteine attachment. Cys23 is lipidated: S-diacylglycerol cysteine. The 76-residue stretch at 200-275 (IYEGGNFMVQ…AFAGAFVVRE (76 aa)) folds into the SPOR domain.

It belongs to the RlpA family.

It localises to the cell membrane. In terms of biological role, lytic transglycosylase with a strong preference for naked glycan strands that lack stem peptides. The chain is Endolytic peptidoglycan transglycosylase RlpA from Campylobacter jejuni subsp. jejuni serotype O:2 (strain ATCC 700819 / NCTC 11168).